The chain runs to 598 residues: Elongation factor 4 (598 aa).

A tr-type G domain is found at 4 to 181; sequence KKIRNFAIIA…AIVNLIPPPQ (178 aa). Residues 16–21 and 128–131 contribute to the GTP site; these read DHGKST and NKID.

Belongs to the TRAFAC class translation factor GTPase superfamily. Classic translation factor GTPase family. LepA subfamily.

Its subcellular location is the cell membrane. It carries out the reaction GTP + H2O = GDP + phosphate + H(+). Required for accurate and efficient protein synthesis under certain stress conditions. May act as a fidelity factor of the translation reaction, by catalyzing a one-codon backward translocation of tRNAs on improperly translocated ribosomes. Back-translocation proceeds from a post-translocation (POST) complex to a pre-translocation (PRE) complex, thus giving elongation factor G a second chance to translocate the tRNAs correctly. Binds to ribosomes in a GTP-dependent manner. The polypeptide is Elongation factor 4 (Mesomycoplasma hyopneumoniae (strain J / ATCC 25934 / NCTC 10110) (Mycoplasma hyopneumoniae)).